Consider the following 352-residue polypeptide: Aliphatic aldoxime dehydratase (352 aa).

Ser-219 is an an aliphatic aldoxime binding site. Heme b is bound at residue His-299. His-320 is a binding site for an aliphatic aldoxime. Residue His-320 is part of the active site.

The protein belongs to the heme-containing dehydratase family. In terms of assembly, homodimer. Heme b is required as a cofactor. Ca(2+) serves as cofactor.

The enzyme catalyses an aliphatic aldoxime = a nitrile + H2O. With respect to regulation, active when the heme iron is in the ferrous state. Is very sensitive to AgNO(3), is also inhibited by hydroxylamine and phenylhydrazine, and hardly inhibited by thiol reagents. Not sensitive to chelating agents and serine-modifying reagents. Its function is as follows. Catalyzes the dehydration of aldoximes to their corresponding nitrile. Aliphatic aldoximes are more effective substrates than aromatic aldoximes. Shows high activity with butyraldoxime and acetaldoxime, but only weak activity with the aromatic aldoxime pyridine-2-aldoxime. Cannot use benzaldoxime, isonitrosoacetophenone and pyridine-4-aldoxime. Is involved in the metabolism of aldoxime in vivo. The polypeptide is Aliphatic aldoxime dehydratase (Pseudomonas chlororaphis (Pseudomonas aureofaciens)).